Here is a 250-residue protein sequence, read N- to C-terminus: Isoprenyl transferase (250 aa).

Asp26 is an active-site residue. A Mg(2+)-binding site is contributed by Asp26. Residues 27–30, Trp31, Arg39, His43, and 71–73 contribute to the substrate site; these read GNGR and STE. Catalysis depends on Asn74, which acts as the Proton acceptor. Substrate is bound by residues Trp75, Arg77, Arg198, and 204 to 206; that span reads RLS. Glu217 lines the Mg(2+) pocket.

Belongs to the UPP synthase family. As to quaternary structure, homodimer. Mg(2+) is required as a cofactor.

In terms of biological role, catalyzes the condensation of isopentenyl diphosphate (IPP) with allylic pyrophosphates generating different type of terpenoids. The sequence is that of Isoprenyl transferase from Streptococcus agalactiae serotype III (strain NEM316).